The primary structure comprises 597 residues: Probable methyltransferase-like protein 25 (597 aa).

Positions 245 to 254 are enriched in basic and acidic residues; the sequence is ECKGDAESVQ. Disordered stretches follow at residues 245-265 and 317-342; these read ECKG…DLSA and TSSQ…KARD. A compositionally biased stretch (polar residues) spans 317–326; sequence TSSQVQNTEK.

Probable methyltransferase. In Mus musculus (Mouse), this protein is Probable methyltransferase-like protein 25 (Mettl25).